The following is a 243-amino-acid chain: uncharacterized protein (243 aa).

The segment at 157 to 181 (SEETKEQPDATTSEKSRSPECPKTT) is disordered.

This is an uncharacterized protein from Rattus norvegicus (Rat).